A 284-amino-acid chain; its full sequence is Phosphatidylglycerol--prolipoprotein diacylglyceryl transferase (284 aa).

The next 7 membrane-spanning stretches (helical) occupy residues Ile14–Ile34, Tyr62–Tyr82, Phe106–Tyr126, Leu136–Ile156, Pro190–Ala210, Gly218–Tyr238, and Leu252–Tyr272. Arg155 serves as a coordination point for a 1,2-diacyl-sn-glycero-3-phospho-(1'-sn-glycerol).

This sequence belongs to the Lgt family.

The protein resides in the cell inner membrane. It carries out the reaction L-cysteinyl-[prolipoprotein] + a 1,2-diacyl-sn-glycero-3-phospho-(1'-sn-glycerol) = an S-1,2-diacyl-sn-glyceryl-L-cysteinyl-[prolipoprotein] + sn-glycerol 1-phosphate + H(+). It participates in protein modification; lipoprotein biosynthesis (diacylglyceryl transfer). Functionally, catalyzes the transfer of the diacylglyceryl group from phosphatidylglycerol to the sulfhydryl group of the N-terminal cysteine of a prolipoprotein, the first step in the formation of mature lipoproteins. The sequence is that of Phosphatidylglycerol--prolipoprotein diacylglyceryl transferase from Helicobacter pylori (strain Shi470).